Reading from the N-terminus, the 137-residue chain is BolA-like protein 1 (137 aa).

Ser81 carries the phosphoserine modification. Residues 115-137 form a disordered region; that stretch reads RENPQLDISPPCLGGSKKTRGTS.

This sequence belongs to the BolA/IbaG family. As to quaternary structure, interacts with GLRX5.

It localises to the mitochondrion. In terms of biological role, acts as a mitochondrial iron-sulfur (Fe-S) cluster assembly factor that facilitates (Fe-S) cluster insertion into a subset of mitochondrial proteins. Probably acts together with the monothiol glutaredoxin GLRX5. May protect cells against oxidative stress. The polypeptide is BolA-like protein 1 (Bola1) (Mus musculus (Mouse)).